A 337-amino-acid polypeptide reads, in one-letter code: Methylthioribose-1-phosphate isomerase (337 aa).

Residues 47–49, Arg81, and Gln184 each bind substrate; that span reads RGA. Asp225 acts as the Proton donor in catalysis. Substrate is bound at residue 235–236; it reads NK.

The protein belongs to the eIF-2B alpha/beta/delta subunits family. MtnA subfamily.

It carries out the reaction 5-(methylsulfanyl)-alpha-D-ribose 1-phosphate = 5-(methylsulfanyl)-D-ribulose 1-phosphate. It functions in the pathway amino-acid biosynthesis; L-methionine biosynthesis via salvage pathway; L-methionine from S-methyl-5-thio-alpha-D-ribose 1-phosphate: step 1/6. Catalyzes the interconversion of methylthioribose-1-phosphate (MTR-1-P) into methylthioribulose-1-phosphate (MTRu-1-P). In Parasynechococcus marenigrum (strain WH8102), this protein is Methylthioribose-1-phosphate isomerase.